Reading from the N-terminus, the 135-residue chain is Large ribosomal subunit protein eL32 (135 aa).

A disordered region spans residues 51-77 (GRDNKFRLKMKGKPRPPEPGYRSPRKV).

It belongs to the eukaryotic ribosomal protein eL32 family.

This is Large ribosomal subunit protein eL32 (rpl32e) from Nanoarchaeum equitans (strain Kin4-M).